A 205-amino-acid polypeptide reads, in one-letter code: uncharacterized protein (205 aa).

A helical membrane pass occupies residues 5–27 (IIVLFIIHFIMINENVFIALLHY).

The protein to T.maritima TM1570.

It is found in the membrane. This is an uncharacterized protein from Aquifex aeolicus (strain VF5).